A 332-amino-acid polypeptide reads, in one-letter code: Anthranilate phosphoribosyltransferase (332 aa).

5-phospho-alpha-D-ribose 1-diphosphate contacts are provided by residues Gly79, 82–83, Thr87, 89–92, 107–115, and Ser119; these read GD, NIST, and KHGNRGVSS. Gly79 is an anthranilate binding site. A Mg(2+)-binding site is contributed by Ser91. Anthranilate is bound at residue Asn110. Arg165 contributes to the anthranilate binding site. Asp223 and Glu224 together coordinate Mg(2+).

The protein belongs to the anthranilate phosphoribosyltransferase family. As to quaternary structure, homodimer. Mg(2+) serves as cofactor.

The enzyme catalyses N-(5-phospho-beta-D-ribosyl)anthranilate + diphosphate = 5-phospho-alpha-D-ribose 1-diphosphate + anthranilate. It functions in the pathway amino-acid biosynthesis; L-tryptophan biosynthesis; L-tryptophan from chorismate: step 2/5. In terms of biological role, catalyzes the transfer of the phosphoribosyl group of 5-phosphorylribose-1-pyrophosphate (PRPP) to anthranilate to yield N-(5'-phosphoribosyl)-anthranilate (PRA). The protein is Anthranilate phosphoribosyltransferase of Vibrio cholerae serotype O1 (strain ATCC 39541 / Classical Ogawa 395 / O395).